Consider the following 998-residue polypeptide: GGVSVPGPMGPSGPRGLPGPPGSPGPQGFQGPPGSSGPMGPRGPPGPPGKNGDDGEAGKPGRPGERGPPGPQGARGLPGTAGLPGMKGHRGFSGLDGAKGDAGPAGPKQMGPRGLPGERGRPGASGPAGARGNDGATGAAGPPGPTGPAGPPGFPGAVGAKGEAGPQGARGSEGPQGVRGEPGPPGPAGAAGPAGNPGADGQPGAKGANGAPGIAGAPGFPGARGPSGPQGPSGAPGPKGNSGEPGAPGNKGDTGAKGEPGPTGIQGPPGPAGEEGKRGARGEPGPTGLPGPPGERGGPGSRGFPGADGIAGPKGPAGERGSPGPAGPKGSPGEAGRPGEAGLPGAKGLTGSPGSPGPDGKTGPPGPAGQDGRPGPAGPPGARGQAGVMGFPGPKGAAGEPGKAGERGVPGPPGAVGPAGKDGEAGAQGPPGPAGPAGERGEQGPAGSPGFQGLPGPAGPPGEAGKPGEQGVPGDLGAPGPSGARGERGFPGERGVQGPPGPAGPRGNGAPGNDGAKGDAGAPGAPGSQGAPGLQGMPGERGAAGLPGPKGDRGDAGPKGADGAPGKDGVRGLTGPIGPPGPAGAAGDKGETGPSGPAGPTGARGAPGDRGEPGPPGPAGFAGPPGADGQPGAKGEPGDAGAKGDAGPPGPAGPTGPPGPIGNVGAPGPKGARGSAGPPGATGFPGAAGRVGPPGPSGNAGPPGPPGPVGKEGGKGPRGETGPAGRPGEVGPPGPPGPGEKGSPGADGPAGAPGTPGPQGIAGQRGVVGLPGQRGERGFPGLPGPSGEPGKQGPSGSSGERGPPGPMGPPGLAGPPGEAGREGSPGAEGSPGRDGSPGPKGDRGETGPGPPGAPGAPGAPGPVGPAGKSGDRGETGPSGPAGPAGPAGARGPAGPQGPRGDKGETGEQGDRGIKGHRGFSGLQGPAGPPGSPGEQGPSGASGPAGPRGPPGSAGTPGKDGLNGLPGPIGPPGPRGRTGDAGPVGPPGPPGPPGPPGPP.

The segment at 1 to 998 (GGVSVPGPMG…PGPPGPPGPP (998 aa)) is disordered. Residues Pro18, Pro21, Pro24, Pro33, Pro48, Pro63, Pro69, Pro78, and Pro84 each carry the 4-hydroxyproline modification. The segment covering 26–39 (PQGFQGPPGSSGPM) has biased composition (low complexity). Residues 51-65 (NGDDGEAGKPGRPGE) show a composition bias toward basic and acidic residues. Position 87 is a 5-hydroxylysine; alternate (Lys87). Lys87 carries O-linked (Gal...) hydroxylysine; alternate glycosylation. A Phosphoserine modification is found at Ser93. Low complexity predominate over residues 101–115 (DAGPAGPKQMGPRGL). Residues Pro116, Pro122, Pro143, Pro152, Pro155, Pro182, Pro185, Pro197, Pro203, Pro212, Pro218, Pro221, and Pro236 each carry the 4-hydroxyproline modification. Positions 122–140 (PGASGPAGARGNDGATGAA) are enriched in low complexity. A compositionally biased stretch (pro residues) spans 142–154 (PPGPTGPAGPPGF). The span at 188–238 (AGAAGPAGNPGADGQPGAKGANGAPGIAGAPGFPGARGPSGPQGPSGAPGP) shows a compositional bias: low complexity. At Lys239 the chain carries 5-hydroxylysine. 8 positions are modified to 4-hydroxyproline: Pro245, Pro248, Pro260, Pro269, Pro284, Pro290, Pro299, and Pro305. Residues 294-303 (GERGGPGSRG) are compositionally biased toward gly residues. A 5-hydroxylysine modification is found at Lys314. Residues Pro323, Pro332, Pro338, Pro344, Pro353, Pro356, Pro365, Pro374, Pro380, Pro392, Pro401, Pro410, Pro413, Pro431, Pro449, Pro455, Pro461, Pro467, Pro473, Pro479, Pro491, Pro500, Pro511, Pro523, Pro526, Pro532, Pro538, and Pro547 each carry the 4-hydroxyproline modification. A compositionally biased stretch (low complexity) spans 347–401 (KGLTGSPGSPGPDGKTGPPGPAGQDGRPGPAGPPGARGQAGVMGFPGPKGAAGEP). Over residues 443 to 470 (QGPAGSPGFQGLPGPAGPPGEAGKPGEQ) the composition is skewed to low complexity. A compositionally biased stretch (low complexity) spans 513–535 (NDGAKGDAGAPGAPGSQGAPGLQ). Lys559 carries the post-translational modification 5-hydroxylysine. 4-hydroxyproline is present on residues Pro565 and Pro580. Positions 592–606 (TGPSGPAGPTGARGA) are enriched in low complexity. Ser595 bears the Phosphoserine mark. 8 positions are modified to 4-hydroxyproline: Pro607, Pro613, Pro616, Pro625, Pro631, Pro649, Pro658, and Pro667. Positions 619-646 (AGFAGPPGADGQPGAKGEPGDAGAKGDA) are enriched in low complexity. Residues 648–660 (PPGPAGPTGPPGP) show a composition bias toward pro residues. Lys670 is subject to 5-hydroxylysine. The segment covering 675 to 691 (SAGPPGATGFPGAAGRV) has biased composition (low complexity). 4-hydroxyproline occurs at positions 679 and 685. 3-hydroxyproline is present on Pro693. Residues Pro694, Pro703, Pro706, Pro727, Pro736, Pro744, Pro753, Pro771, Pro780, Pro783, Pro789, Pro804, Pro810, Pro816, Pro825, and Pro831 each carry the 4-hydroxyproline modification. The segment covering 720–729 (ETGPAGRPGE) has biased composition (low complexity). The segment covering 741–762 (KGSPGADGPAGAPGTPGPQGIA) has biased composition (low complexity). The span at 803–813 (PPGPMGPPGLA) shows a compositional bias: pro residues. Low complexity predominate over residues 815 to 830 (PPGEAGREGSPGAEGS). Position 840 is a 5-hydroxylysine (Lys840). Positions 848–863 (PGPPGAPGAPGAPGPV) are enriched in pro residues. 4-hydroxyproline is present on residues Pro851, Pro854, and Pro857. The span at 884-898 (AGPAGARGPAGPQGP) shows a compositional bias: low complexity. Basic and acidic residues predominate over residues 899-913 (RGDKGETGEQGDRGI). Lys902 carries the 5-hydroxylysine modification. The residue at position 914 (Lys914) is a 5-hydroxylysine; alternate. Lys914 carries O-linked (Gal...) hydroxylysine; alternate glycosylation. 4 positions are modified to 4-hydroxyproline: Pro929, Pro932, Pro950, and Pro965. A compositionally biased stretch (low complexity) spans 932-965 (PGEQGPSGASGPAGPRGPPGSAGTPGKDGLNGLP). Pro970 bears the 3-hydroxyproline mark. Pro971 carries the 4-hydroxyproline modification. Residues 983 to 998 (VGPPGPPGPPGPPGPP) show a composition bias toward pro residues. A 3-hydroxyproline modification is found at Pro985. 4-hydroxyproline is present on Pro986. At Pro988 the chain carries 3-hydroxyproline. Pro989 carries the 4-hydroxyproline modification. Pro991 carries the post-translational modification 3-hydroxyproline. 4-hydroxyproline occurs at positions 992, 995, and 998.

This sequence belongs to the fibrillar collagen family. Trimers of one alpha 2(I) and two alpha 1(I) chains. Contains mostly 4-hydroxyproline. Proline residues at the third position of the tripeptide repeating unit (G-X-Y) are hydroxylated in some or all of the chains. Post-translationally, contains 3-hydroxyproline at a few sites. This modification occurs on the first proline residue in the sequence motif Gly-Pro-Hyp, where Hyp is 4-hydroxyproline. In terms of processing, lysine residues at the third position of the tripeptide repeating unit (G-X-Y) are 5-hydroxylated in some or all of the chains. O-glycosylated on hydroxylated lysine residues. The O-linked glycan consists of a Glc-Gal disaccharide. In terms of tissue distribution, expressed in bones.

The protein localises to the secreted. Its subcellular location is the extracellular space. It localises to the extracellular matrix. Functionally, type I collagen is a member of group I collagen (fibrillar forming collagen). This Glyptodon sp. (strain SLP-2019) (Giant armadillo) protein is Collagen alpha-1(I) chain.